A 476-amino-acid chain; its full sequence is Bifunctional protein HldE (476 aa).

The tract at residues 1 to 319 (MKLTLPDYDQ…EAIYGSQDSG (319 aa)) is ribokinase. 195-198 (NLSE) contacts ATP. D264 is an active-site residue. The tract at residues 344–476 (MTNGCFDILH…IIEAIRGGKG (133 aa)) is cytidylyltransferase.

In the N-terminal section; belongs to the carbohydrate kinase PfkB family. The protein in the C-terminal section; belongs to the cytidylyltransferase family. As to quaternary structure, homodimer.

The catalysed reaction is D-glycero-beta-D-manno-heptose 7-phosphate + ATP = D-glycero-beta-D-manno-heptose 1,7-bisphosphate + ADP + H(+). It carries out the reaction D-glycero-beta-D-manno-heptose 1-phosphate + ATP + H(+) = ADP-D-glycero-beta-D-manno-heptose + diphosphate. Its pathway is nucleotide-sugar biosynthesis; ADP-L-glycero-beta-D-manno-heptose biosynthesis; ADP-L-glycero-beta-D-manno-heptose from D-glycero-beta-D-manno-heptose 7-phosphate: step 1/4. The protein operates within nucleotide-sugar biosynthesis; ADP-L-glycero-beta-D-manno-heptose biosynthesis; ADP-L-glycero-beta-D-manno-heptose from D-glycero-beta-D-manno-heptose 7-phosphate: step 3/4. Its function is as follows. Catalyzes the phosphorylation of D-glycero-D-manno-heptose 7-phosphate at the C-1 position to selectively form D-glycero-beta-D-manno-heptose-1,7-bisphosphate. In terms of biological role, catalyzes the ADP transfer from ATP to D-glycero-beta-D-manno-heptose 1-phosphate, yielding ADP-D-glycero-beta-D-manno-heptose. In Photobacterium profundum (strain SS9), this protein is Bifunctional protein HldE.